A 244-amino-acid polypeptide reads, in one-letter code: T-cell immunoreceptor with Ig and ITIM domains (244 aa).

Positions Met-1–Gly-21 are cleaved as a signal peptide. Residues Met-22 to Leu-124 enclose the Ig-like V-type domain. Residues Met-22–Pro-141 are Extracellular-facing. N-linked (GlcNAc...) asparagine glycans are attached at residues Asn-32 and Asn-101. The tract at residues Asn-32 to Ile-42 is homodimerization. A disulfide bridge connects residues Cys-45 and Cys-108. A helical membrane pass occupies residues Leu-142–Ala-162. Residues Leu-163–Gly-244 are Cytoplasmic-facing. The residue at position 225 (Tyr-225) is a Phosphotyrosine. Positions Leu-229 to Leu-234 match the ITIM motif motif.

As to quaternary structure, homodimer in cis; binds with high affinity to PVR, forming a heterotetrameric assembly of two TIGIT and two PVR molecules. Binds with lower affinity to NECTIN2 and NECTIN3. Interacts with GRB2. Interacts with NECTIN4. As to expression, expressed at low levels on peripheral memory and regulatory CD4+ T-cells and NK cells and is up-regulated following activation of these cells (at protein level).

The protein resides in the cell membrane. Inhibitory receptor that plays a role in the modulation of immune responses. Suppresses T-cell activation by promoting the generation of mature immunoregulatory dendritic cells. Upon binding to its ligands PVR/CD155 or NECTIN2/CD112, which are expressed on antigen-presenting cells, sends inhibitory signals to the T-cell or NK cell. Mechanistically, interaction with ligand leads to phosphorylation of the cytoplasmic tail by Src family tyrosine kinases such as FYN or LCK, allowing subsequent binding to adapter GRB2 and SHIP1/INPP5D. In turn, inhibits PI3K and MAPK signaling cascades. In addition, associates with beta-arrestin-2/ARRB2 to recruit SHIP1/INPP5D that suppresses autoubiquitination of TRAF6 and subsequently inhibits NF-kappa-B signaling pathway. Also acts as a receptor for NECTIN4 to inhibit NK cell cytotoxicity. This Homo sapiens (Human) protein is T-cell immunoreceptor with Ig and ITIM domains (TIGIT).